We begin with the raw amino-acid sequence, 502 residues long: UDP-glucuronosyltransferase 2C1 (502 aa).

2 N-linked (GlcNAc...) asparagine glycosylation sites follow: N177 and N288. The helical transmembrane segment at 466–481 (VVVFLLTCVATIIFLA) threads the bilayer.

The protein belongs to the UDP-glycosyltransferase family.

The protein localises to the microsome membrane. It is found in the endoplasmic reticulum membrane. The enzyme catalyses glucuronate acceptor + UDP-alpha-D-glucuronate = acceptor beta-D-glucuronoside + UDP + H(+). Its function is as follows. UDPGT is of major importance in the conjugation and subsequent elimination of potentially toxic xenobiotics and endogenous compounds. The chain is UDP-glucuronosyltransferase 2C1 (UGT2C1) from Oryctolagus cuniculus (Rabbit).